Reading from the N-terminus, the 1025-residue chain is DNA ligase 4 (1025 aa).

Positions 1 to 36 (MMQPTPAPSSAPGSPQRTQAEPEMETPSYPQPPQNV) are disordered. Residues Glu-289, Lys-291, Leu-292, Arg-296, Glu-349, Phe-387, Glu-447, Lys-452, Lys-469, and Lys-471 each coordinate ATP. The active-site N6-AMP-lysine intermediate is the Lys-291. Residue Glu-349 coordinates Mg(2+). Glu-447 is a Mg(2+) binding site. The region spanning 667–763 (VKTDIFNGMK…EPAPFKKKYF (97 aa)) is the BRCT 1 domain. The interval 773–904 (ADEYNEDDGE…TTPDVDGDVK (132 aa)) is disordered. Acidic residues-rich tracts occupy residues 775–785 (EYNEDDGEEEG) and 806–816 (SETEDEDEEQA). Basic and acidic residues predominate over residues 817-838 (PEIKEEQDGELHEWLKVDDRKS). Positions 845–870 (DEEDSVTEDDSDNADVADEEEPDLDD) are enriched in acidic residues. Over residues 891-904 (RHRETTPDVDGDVK) the composition is skewed to basic and acidic residues. The BRCT 2 domain maps to 915-1025 (DPDVIFKHLC…TLLDEEGESF (111 aa)).

It belongs to the ATP-dependent DNA ligase family. The cofactor is Mg(2+).

It is found in the nucleus. It catalyses the reaction ATP + (deoxyribonucleotide)n-3'-hydroxyl + 5'-phospho-(deoxyribonucleotide)m = (deoxyribonucleotide)n+m + AMP + diphosphate.. Functionally, DNA ligase involved in DNA non-homologous end joining (NHEJ); required for double-strand break (DSB) repair. In Coprinopsis cinerea (strain Okayama-7 / 130 / ATCC MYA-4618 / FGSC 9003) (Inky cap fungus), this protein is DNA ligase 4 (LIG4).